A 216-amino-acid polypeptide reads, in one-letter code: Imidazole glycerol phosphate synthase subunit HisH (216 aa).

Positions R5–A213 constitute a Glutamine amidotransferase type-1 domain. C83 (nucleophile) is an active-site residue. Catalysis depends on residues H188 and E190.

In terms of assembly, heterodimer of HisH and HisF.

Its subcellular location is the cytoplasm. The enzyme catalyses 5-[(5-phospho-1-deoxy-D-ribulos-1-ylimino)methylamino]-1-(5-phospho-beta-D-ribosyl)imidazole-4-carboxamide + L-glutamine = D-erythro-1-(imidazol-4-yl)glycerol 3-phosphate + 5-amino-1-(5-phospho-beta-D-ribosyl)imidazole-4-carboxamide + L-glutamate + H(+). The catalysed reaction is L-glutamine + H2O = L-glutamate + NH4(+). Its pathway is amino-acid biosynthesis; L-histidine biosynthesis; L-histidine from 5-phospho-alpha-D-ribose 1-diphosphate: step 5/9. IGPS catalyzes the conversion of PRFAR and glutamine to IGP, AICAR and glutamate. The HisH subunit catalyzes the hydrolysis of glutamine to glutamate and ammonia as part of the synthesis of IGP and AICAR. The resulting ammonia molecule is channeled to the active site of HisF. The protein is Imidazole glycerol phosphate synthase subunit HisH of Synechococcus sp. (strain JA-3-3Ab) (Cyanobacteria bacterium Yellowstone A-Prime).